Consider the following 814-residue polypeptide: ATP-dependent RNA helicase dbp-7 (814 aa).

The segment at 26–102 is disordered; the sequence is GGRWRDRVKA…PPPPPTHAMK (77 aa). Basic and acidic residues-rich tracts occupy residues 28–42 and 69–78; these read RWRDRVKAQKGEKGG and QRTEDGDSGR. Positions 145-174 match the Q motif motif; the sequence is ENFLSLGLSRRVSQHLATKLEMKAPTAIQK. The region spanning 178–384 is the Helicase ATP-binding domain; sequence PQLVKEDSDA…EISLEDAVHI (207 aa). Residue 191-198 coordinates ATP; sequence AETGSGKT. Residues 313 to 316 carry the DEAD box motif; it reads DEGD. In terms of domain architecture, Helicase C-terminal spans 422–622; sequence RLVTLIALLK…GFATNINVPG (201 aa). Disordered stretches follow at residues 464–483, 662–695, and 741–795; these read TPRAEPEPKPEGEAPTKPNI, ESKSEKFAASKQGKKGKKDAKKDENKTPDNPLLV, and GIGG…AGRR. The span at 467–477 shows a compositional bias: basic and acidic residues; the sequence is AEPEPKPEGEA. Over residues 779-790 the composition is skewed to acidic residues; sequence DDDERDFGAADE.

The protein belongs to the DEAD box helicase family. DDX31/DBP7 subfamily.

Its subcellular location is the nucleus. It is found in the nucleolus. It carries out the reaction ATP + H2O = ADP + phosphate + H(+). ATP-binding RNA helicase involved in the biogenesis of 60S ribosomal subunits and is required for the normal formation of 25S and 5.8S rRNAs. The chain is ATP-dependent RNA helicase dbp-7 (dbp-7) from Neurospora crassa (strain ATCC 24698 / 74-OR23-1A / CBS 708.71 / DSM 1257 / FGSC 987).